Consider the following 309-residue polypeptide: Carbamate kinase 2 (309 aa).

It belongs to the carbamate kinase family.

It localises to the cytoplasm. It catalyses the reaction hydrogencarbonate + NH4(+) + ATP = carbamoyl phosphate + ADP + H2O + H(+). The protein operates within metabolic intermediate metabolism; carbamoyl phosphate degradation; CO(2) and NH(3) from carbamoyl phosphate: step 1/1. The polypeptide is Carbamate kinase 2 (arcC2) (Staphylococcus epidermidis (strain ATCC 12228 / FDA PCI 1200)).